Consider the following 335-residue polypeptide: Aliphatic sulfonates import ATP-binding protein SsuB (335 aa).

One can recognise an ABC transporter domain in the interval 74 to 293 (VRLTRVSKRY…ARASAAFAAL (220 aa)). ATP is bound at residue 106-113 (GRSGCGKS). Residues 308–335 (APAAPNAAGPEGASRGRAAPASGLRWAV) are disordered.

This sequence belongs to the ABC transporter superfamily. Aliphatic sulfonates importer (TC 3.A.1.17.2) family. In terms of assembly, the complex is composed of two ATP-binding proteins (SsuB), two transmembrane proteins (SsuC) and a solute-binding protein (SsuA).

The protein resides in the cell inner membrane. The catalysed reaction is ATP + H2O + aliphatic sulfonate-[sulfonate-binding protein]Side 1 = ADP + phosphate + aliphatic sulfonateSide 2 + [sulfonate-binding protein]Side 1.. Functionally, part of the ABC transporter complex SsuABC involved in aliphatic sulfonates import. Responsible for energy coupling to the transport system. The sequence is that of Aliphatic sulfonates import ATP-binding protein SsuB from Burkholderia mallei (strain ATCC 23344).